We begin with the raw amino-acid sequence, 1072 residues long: Carbamoyl phosphate synthase large chain (1072 aa).

The segment at 1 to 401 is carboxyphosphate synthetic domain; it reads MPKRLDINTI…SLLKAVRSLE (401 aa). Residues arginine 129, arginine 169, glycine 175, glycine 176, lysine 208, isoleucine 210, glutamate 215, glycine 241, valine 242, histidine 243, glutamine 284, and glutamate 298 each coordinate ATP. In terms of domain architecture, ATP-grasp 1 spans 133-327; sequence RTLMQELNEP…IAKLAAKIAV (195 aa). Mg(2+) is bound by residues glutamine 284, glutamate 298, and asparagine 300. Glutamine 284, glutamate 298, and asparagine 300 together coordinate Mn(2+). The tract at residues 402-546 is oligomerization domain; that stretch reads LGIYHLELDH…YSTYADENES (145 aa). The segment at 547-929 is carbamoyl phosphate synthetic domain; that stretch reads IVTDRKSVVV…ALYKGLVASG (383 aa). Residues 671–861 enclose the ATP-grasp 2 domain; the sequence is EAALTKLGIP…MANVATKVIL (191 aa). ATP is bound by residues arginine 707, arginine 746, glutamate 752, glycine 777, valine 778, histidine 779, serine 780, glutamine 820, and glutamate 832. Residues glutamine 820, glutamate 832, and asparagine 834 each coordinate Mg(2+). Residues glutamine 820, glutamate 832, and asparagine 834 each contribute to the Mn(2+) site. The MGS-like domain occupies 930 to 1072; the sequence is INIPTHGSVI…QTKRHEVVHA (143 aa). The interval 930–1072 is allosteric domain; that stretch reads INIPTHGSVI…QTKRHEVVHA (143 aa).

It belongs to the CarB family. As to quaternary structure, composed of two chains; the small (or glutamine) chain promotes the hydrolysis of glutamine to ammonia, which is used by the large (or ammonia) chain to synthesize carbamoyl phosphate. Tetramer of heterodimers (alpha,beta)4. Mg(2+) serves as cofactor. Requires Mn(2+) as cofactor.

It catalyses the reaction hydrogencarbonate + L-glutamine + 2 ATP + H2O = carbamoyl phosphate + L-glutamate + 2 ADP + phosphate + 2 H(+). The enzyme catalyses hydrogencarbonate + NH4(+) + 2 ATP = carbamoyl phosphate + 2 ADP + phosphate + 2 H(+). It functions in the pathway amino-acid biosynthesis; L-arginine biosynthesis; carbamoyl phosphate from bicarbonate: step 1/1. The protein operates within pyrimidine metabolism; UMP biosynthesis via de novo pathway; (S)-dihydroorotate from bicarbonate: step 1/3. Large subunit of the glutamine-dependent carbamoyl phosphate synthetase (CPSase). CPSase catalyzes the formation of carbamoyl phosphate from the ammonia moiety of glutamine, carbonate, and phosphate donated by ATP, constituting the first step of 2 biosynthetic pathways, one leading to arginine and/or urea and the other to pyrimidine nucleotides. The large subunit (synthetase) binds the substrates ammonia (free or transferred from glutamine from the small subunit), hydrogencarbonate and ATP and carries out an ATP-coupled ligase reaction, activating hydrogencarbonate by forming carboxy phosphate which reacts with ammonia to form carbamoyl phosphate. The sequence is that of Carbamoyl phosphate synthase large chain from Bacillus thuringiensis (strain Al Hakam).